The following is a 126-amino-acid chain: Aspartate 1-decarboxylase (126 aa).

Ser25 acts as the Schiff-base intermediate with substrate; via pyruvic acid in catalysis. Position 25 is a pyruvic acid (Ser) (Ser25). Thr57 contacts substrate. The active-site Proton donor is Tyr58. A substrate-binding site is contributed by 73–75 (GGA).

This sequence belongs to the PanD family. In terms of assembly, heterooctamer of four alpha and four beta subunits. Pyruvate is required as a cofactor. Is synthesized initially as an inactive proenzyme, which is activated by self-cleavage at a specific serine bond to produce a beta-subunit with a hydroxyl group at its C-terminus and an alpha-subunit with a pyruvoyl group at its N-terminus.

The protein resides in the cytoplasm. The catalysed reaction is L-aspartate + H(+) = beta-alanine + CO2. Its pathway is cofactor biosynthesis; (R)-pantothenate biosynthesis; beta-alanine from L-aspartate: step 1/1. Functionally, catalyzes the pyruvoyl-dependent decarboxylation of aspartate to produce beta-alanine. The chain is Aspartate 1-decarboxylase from Xylella fastidiosa (strain Temecula1 / ATCC 700964).